The chain runs to 122 residues: Large ribosomal subunit protein uL14 (122 aa).

Belongs to the universal ribosomal protein uL14 family. As to quaternary structure, part of the 50S ribosomal subunit. Forms a cluster with proteins L3 and L19. In the 70S ribosome, L14 and L19 interact and together make contacts with the 16S rRNA in bridges B5 and B8.

Binds to 23S rRNA. Forms part of two intersubunit bridges in the 70S ribosome. The chain is Large ribosomal subunit protein uL14 from Paramagnetospirillum magneticum (strain ATCC 700264 / AMB-1) (Magnetospirillum magneticum).